Here is a 45-residue protein sequence, read N- to C-terminus: Large ribosomal subunit protein bL34 (45 aa).

It belongs to the bacterial ribosomal protein bL34 family.

The protein is Large ribosomal subunit protein bL34 of Arthrobacter sp. (strain FB24).